A 423-amino-acid polypeptide reads, in one-letter code: Glucose-1-phosphate adenylyltransferase (423 aa).

Residues Tyr98, Gly163, 178–179 (EK), and Ser189 contribute to the alpha-D-glucose 1-phosphate site.

The protein belongs to the bacterial/plant glucose-1-phosphate adenylyltransferase family. As to quaternary structure, homotetramer.

It carries out the reaction alpha-D-glucose 1-phosphate + ATP + H(+) = ADP-alpha-D-glucose + diphosphate. It participates in glycan biosynthesis; glycogen biosynthesis. Involved in the biosynthesis of ADP-glucose, a building block required for the elongation reactions to produce glycogen. Catalyzes the reaction between ATP and alpha-D-glucose 1-phosphate (G1P) to produce pyrophosphate and ADP-Glc. This is Glucose-1-phosphate adenylyltransferase from Thermotoga neapolitana (strain ATCC 49049 / DSM 4359 / NBRC 107923 / NS-E).